Consider the following 441-residue polypeptide: pH-response regulator protein palC (441 aa).

The 350-residue stretch at 3–352 folds into the BRO1 domain; that stretch reads ISYTGQLPTT…GAAYAAILQL (350 aa). Disordered stretches follow at residues 278–304 and 414–441; these read RKDD…TSSG and KWTP…GSYY.

It belongs to the palC family.

Its function is as follows. Required for the proteolytic cleavage of the transcription factor RIM101 in response to alkaline ambient pH. In Yarrowia lipolytica (strain CLIB 122 / E 150) (Yeast), this protein is pH-response regulator protein palC.